Consider the following 194-residue polypeptide: ATP-dependent Clp protease proteolytic subunit (194 aa).

S98 acts as the Nucleophile in catalysis. H123 is a catalytic residue.

Belongs to the peptidase S14 family. As to quaternary structure, fourteen ClpP subunits assemble into 2 heptameric rings which stack back to back to give a disk-like structure with a central cavity, resembling the structure of eukaryotic proteasomes.

The protein resides in the cytoplasm. The catalysed reaction is Hydrolysis of proteins to small peptides in the presence of ATP and magnesium. alpha-casein is the usual test substrate. In the absence of ATP, only oligopeptides shorter than five residues are hydrolyzed (such as succinyl-Leu-Tyr-|-NHMec, and Leu-Tyr-Leu-|-Tyr-Trp, in which cleavage of the -Tyr-|-Leu- and -Tyr-|-Trp bonds also occurs).. Its function is as follows. Cleaves peptides in various proteins in a process that requires ATP hydrolysis. Has a chymotrypsin-like activity. Plays a major role in the degradation of misfolded proteins. The chain is ATP-dependent Clp protease proteolytic subunit from Staphylococcus saprophyticus subsp. saprophyticus (strain ATCC 15305 / DSM 20229 / NCIMB 8711 / NCTC 7292 / S-41).